The sequence spans 190 residues: Xanthine phosphoribosyltransferase (190 aa).

2 residues coordinate xanthine: Leu-20 and Asn-27. 127-131 (AYGNA) contributes to the 5-phospho-alpha-D-ribose 1-diphosphate binding site. Lys-155 is a xanthine binding site.

The protein belongs to the purine/pyrimidine phosphoribosyltransferase family. Xpt subfamily. In terms of assembly, homodimer.

The protein localises to the cytoplasm. The enzyme catalyses XMP + diphosphate = xanthine + 5-phospho-alpha-D-ribose 1-diphosphate. It functions in the pathway purine metabolism; XMP biosynthesis via salvage pathway; XMP from xanthine: step 1/1. Its function is as follows. Converts the preformed base xanthine, a product of nucleic acid breakdown, to xanthosine 5'-monophosphate (XMP), so it can be reused for RNA or DNA synthesis. This is Xanthine phosphoribosyltransferase from Bacteroides thetaiotaomicron (strain ATCC 29148 / DSM 2079 / JCM 5827 / CCUG 10774 / NCTC 10582 / VPI-5482 / E50).